The following is a 61-amino-acid chain: U-stichotoxin-Hcr1b (61 aa).

An N-terminal signal peptide occupies residues 1–19; the sequence is PILIFAFVMFAVMVNAKPS. The propeptide occupies 20 to 31; that stretch reads IDDAEMKREPKP. Disulfide bonds link Cys38/Cys49 and Cys41/Cys56.

This sequence belongs to the Hau1a/HC18/HC19 family.

The protein resides in the secreted. Its subcellular location is the nematocyst. Toxin that is lethal to crab. Does not produce the typical symptoms associated with sodium channel toxins in crabs, suggesting that it likely does not act on sodium channels. In Radianthus crispa (Leathery sea anemone), this protein is U-stichotoxin-Hcr1b.